The chain runs to 382 residues: S-adenosylmethionine synthase (382 aa).

His-16 is an ATP binding site. Asp-18 is a binding site for Mg(2+). Residue Glu-44 participates in K(+) binding. Residues Glu-57 and Gln-100 each coordinate L-methionine. The flexible loop stretch occupies residues 100 to 110 (QSADIAMGVDE). ATP-binding positions include 165 to 167 (DAK), Asp-240, 246 to 247 (RK), Ala-263, and Lys-267. Asp-240 lines the L-methionine pocket. Lys-271 provides a ligand contact to L-methionine.

Belongs to the AdoMet synthase family. In terms of assembly, homotetramer; dimer of dimers. Mg(2+) is required as a cofactor. K(+) serves as cofactor.

It is found in the cytoplasm. It carries out the reaction L-methionine + ATP + H2O = S-adenosyl-L-methionine + phosphate + diphosphate. It functions in the pathway amino-acid biosynthesis; S-adenosyl-L-methionine biosynthesis; S-adenosyl-L-methionine from L-methionine: step 1/1. Its function is as follows. Catalyzes the formation of S-adenosylmethionine (AdoMet) from methionine and ATP. The overall synthetic reaction is composed of two sequential steps, AdoMet formation and the subsequent tripolyphosphate hydrolysis which occurs prior to release of AdoMet from the enzyme. In Saccharophagus degradans (strain 2-40 / ATCC 43961 / DSM 17024), this protein is S-adenosylmethionine synthase.